A 540-amino-acid chain; its full sequence is Medium/long-chain-fatty-acid--[acyl-carrier-protein] ligase FadD10 (540 aa).

Thr177 contributes to the Mg(2+) binding site. Positions 226, 316, and 320 each coordinate ATP. Glu321 is a binding site for Mg(2+). ATP is bound at residue Asp408.

Belongs to the ATP-dependent AMP-binding enzyme family. As to quaternary structure, homodimer. Requires Mg(2+) as cofactor.

It is found in the cytoplasm. It catalyses the reaction a medium-chain fatty acid + holo-[ACP] + ATP = a medium-chain fatty acyl-[ACP] + AMP + diphosphate. It carries out the reaction a medium-chain fatty acid + ATP + H(+) = a medium-chain fatty acyl-AMP + diphosphate. The catalysed reaction is a medium-chain fatty acyl-AMP + holo-[ACP] = a medium-chain fatty acyl-[ACP] + AMP + H(+). The enzyme catalyses a long-chain fatty acid + holo-[ACP] + ATP = a long-chain fatty acyl-[ACP] + AMP + diphosphate. It catalyses the reaction a long-chain fatty acid + ATP + H(+) = a long-chain fatty acyl-AMP + diphosphate. It carries out the reaction a long-chain fatty acyl-AMP + holo-[ACP] = a long-chain fatty acyl-[ACP] + AMP + H(+). The catalysed reaction is a (2E)-enoyl fatty acid + holo-[ACP] + ATP = a (2E)-enoyl-[ACP] + AMP + diphosphate. The enzyme catalyses a (2E)-enoyl fatty acid + ATP + H(+) = a (2E)-2-fatty-enoyl-AMP + diphosphate. It catalyses the reaction a (2E)-2-fatty-enoyl-AMP + holo-[ACP] = a (2E)-enoyl-[ACP] + AMP + H(+). It carries out the reaction a (3R)-3-isocyanyl-fatty acid + holo-[ACP] + ATP = a (3R)-3-isocyanyl-fatty acyl-[ACP] + AMP + diphosphate. The catalysed reaction is a (3R)-3-isocyanyl-fatty acid + ATP + H(+) = a (3R)-3-isocyanyl-fatty acyl-AMP + diphosphate. The enzyme catalyses a (3R)-3-isocyanyl-fatty acyl-AMP + holo-[ACP] = a (3R)-3-isocyanyl-fatty acyl-[ACP] + AMP + H(+). It functions in the pathway lipid metabolism; fatty acid metabolism. Its function is as follows. Acyl:acyl-carrier protein ligase involved in the biosynthesis of a unique class of isonitrile lipopeptides (INLPs) that seem to function as virulence factors in M.tuberculosis and to play a role in metal acquisition. Catalyzes the activation of medium/long-chain fatty acids as acyl-adenylates (acyl-AMP), which are then transferred to the phosphopantetheine arm of the acyl-carrier protein (ACP) MT0109. Acts twice during the INLP pathway, catalyzing the activation of a (2E)-enoyl fatty acid as well as the corresponding (3R)-3-isocyanyl-fatty acid as acyl-adenylates (acyl-AMP), and then the acyl transfer to the dedicated acyl-carrier protein MT0109. The protein is Medium/long-chain-fatty-acid--[acyl-carrier-protein] ligase FadD10 (fadD10) of Mycobacterium tuberculosis (strain CDC 1551 / Oshkosh).